A 146-amino-acid polypeptide reads, in one-letter code: 3-dehydroquinate dehydratase (146 aa).

Tyrosine 23 serves as the catalytic Proton acceptor. Positions 74, 80, and 87 each coordinate substrate. The Proton donor role is filled by histidine 100. Substrate contacts are provided by residues 101 to 102 and arginine 111; that span reads IS.

The protein belongs to the type-II 3-dehydroquinase family. In terms of assembly, homododecamer.

The enzyme catalyses 3-dehydroquinate = 3-dehydroshikimate + H2O. It functions in the pathway metabolic intermediate biosynthesis; chorismate biosynthesis; chorismate from D-erythrose 4-phosphate and phosphoenolpyruvate: step 3/7. Its function is as follows. Catalyzes a trans-dehydration via an enolate intermediate. The protein is 3-dehydroquinate dehydratase of Bacillus mycoides (strain KBAB4) (Bacillus weihenstephanensis).